Consider the following 551-residue polypeptide: RanBD1 domain-containing protein C584.03c (551 aa).

The RanBD1 domain occupies 1–309 (MDELLNVASH…LLLKYADDET (309 aa)). The residue at position 441 (S441) is a Phosphoserine. Positions 522–551 (SVIPHSEPESSSKVINCQAKLNVEKEKKNP) are disordered.

The protein localises to the nucleus. In Schizosaccharomyces pombe (strain 972 / ATCC 24843) (Fission yeast), this protein is RanBD1 domain-containing protein C584.03c.